The chain runs to 333 residues: Putative fimbrium anchoring subunit Fim4B (333 aa).

A signal peptide spans 1 to 20; it reads MRNTRYGFLVLLSSLLMLTG. Cys-21 is lipidated: N-palmitoyl cysteine. Cys-21 carries the S-diacylglycerol cysteine lipid modification. The tract at residues 274-333 is disordered; that stretch reads ENAGTGEDGKPTPPPEIELPPDDKIEVDKPETPPNPDGGGGMGGNVDGWGPEDNVELPVN. Over residues 294 to 304 the composition is skewed to basic and acidic residues; that stretch reads PDDKIEVDKPE. Positions 310–320 are enriched in gly residues; it reads DGGGGMGGNVD.

It belongs to the bacteroidetes fimbrillin superfamily. FimB/Mfa2 family.

It is found in the cell outer membrane. Its function is as follows. Putative fimbrium anchoring subunit. The polypeptide is Putative fimbrium anchoring subunit Fim4B (Bacteroides ovatus (strain ATCC 8483 / DSM 1896 / JCM 5824 / BCRC 10623 / CCUG 4943 / NCTC 11153)).